The primary structure comprises 131 residues: Small ribosomal subunit protein uS11 (131 aa).

This sequence belongs to the universal ribosomal protein uS11 family. In terms of assembly, part of the 30S ribosomal subunit. Interacts with proteins S7 and S18. Binds to IF-3.

Its function is as follows. Located on the platform of the 30S subunit, it bridges several disparate RNA helices of the 16S rRNA. Forms part of the Shine-Dalgarno cleft in the 70S ribosome. The sequence is that of Small ribosomal subunit protein uS11 from Exiguobacterium sibiricum (strain DSM 17290 / CCUG 55495 / CIP 109462 / JCM 13490 / 255-15).